Here is a 126-residue protein sequence, read N- to C-terminus: Small ribosomal subunit protein uS13 (126 aa).

The interval R94–K126 is disordered. Basic residues predominate over residues R108–K126.

Belongs to the universal ribosomal protein uS13 family. Part of the 30S ribosomal subunit. Forms a loose heterodimer with protein S19. Forms two bridges to the 50S subunit in the 70S ribosome.

Functionally, located at the top of the head of the 30S subunit, it contacts several helices of the 16S rRNA. In the 70S ribosome it contacts the 23S rRNA (bridge B1a) and protein L5 of the 50S subunit (bridge B1b), connecting the 2 subunits; these bridges are implicated in subunit movement. Contacts the tRNAs in the A and P-sites. The sequence is that of Small ribosomal subunit protein uS13 from Streptomyces avermitilis (strain ATCC 31267 / DSM 46492 / JCM 5070 / NBRC 14893 / NCIMB 12804 / NRRL 8165 / MA-4680).